The primary structure comprises 1237 residues: uncharacterized protein (1237 aa).

Residues 591–712 (KDMLEIYSDL…IVLSKYTQWT (122 aa)) form the MHD1 domain. Residues 786–906 (LIEALDVAES…GDYLPREEWF (121 aa)) enclose the C2 domain. The MHD2 domain maps to 1014 to 1130 (EAAIYELLDY…KPTDFLLQEC (117 aa)).

This is an uncharacterized protein from Schizosaccharomyces pombe (strain 972 / ATCC 24843) (Fission yeast).